We begin with the raw amino-acid sequence, 401 residues long: L-threonine ammonia-lyase (401 aa).

K51 is modified (N6-(pyridoxal phosphate)lysine). Pyridoxal 5'-phosphate-binding positions include N78, 178-181, and S301; that span reads GGGL. The region spanning 326-401 is the ACT domain; that stretch reads FIETFVMDRP…AKGYEVRIVG (76 aa).

Belongs to the serine/threonine dehydratase family. In terms of assembly, homotetramer. It depends on pyridoxal 5'-phosphate as a cofactor.

The catalysed reaction is L-threonine = 2-oxobutanoate + NH4(+). The enzyme catalyses L-serine = pyruvate + NH4(+). It functions in the pathway amino-acid biosynthesis; L-isoleucine biosynthesis; 2-oxobutanoate from L-threonine: step 1/1. Its activity is regulated as follows. Activity is insensitive to allosteric regulators L-valine and L-isoleucine at low concentrations, while these L-amino acids are inhibitors at high concentrations. Is insensitive to ammonium chloride and AMP. Inhibited in the presence of aminoxyacetic acid (AOAA), an inhibitor of pyridoxal phosphate-dependent enzymes. Functionally, catalyzes the conversion of L-threonine to 2-oxobutanoate and ammonia. Can also use L-serine, but the catalytic efficiency toward L-threonine is about sixfold higher than that toward L-serine. Also shows weak activity toward L-allo-threonine, but cannot use the corresponding D-amino acids. Does not exhibit racemase activity toward various amino acids, including serine. Physiologically, is likely involved in the threonine-dependent pathway of isoleucine biosynthesis. This Thermotoga maritima (strain ATCC 43589 / DSM 3109 / JCM 10099 / NBRC 100826 / MSB8) protein is L-threonine ammonia-lyase.